Here is a 337-residue protein sequence, read N- to C-terminus: ERI1 exoribonuclease 3 (337 aa).

The region spanning phenylalanine 146–methionine 320 is the Exonuclease domain. Mg(2+) contacts are provided by aspartate 150, glutamate 152, and aspartate 249. Glutamate 152 serves as the catalytic Proton acceptor. Residue glutamate 152 coordinates AMP. Histidine 307 (proton acceptor) is an active-site residue. Histidine 307 is a binding site for AMP. Residue aspartate 312 coordinates Mg(2+).

In terms of assembly, interacts with PRNP. Mg(2+) serves as cofactor.

The polypeptide is ERI1 exoribonuclease 3 (ERI3) (Homo sapiens (Human)).